A 108-amino-acid polypeptide reads, in one-letter code: MSFPRRPKVTKSDIVDQISLNIRNNNLKLEKKYIRLVIDAFFEELKSNLCSNNVIEFRSFGTFEVRKRKGRLNARNPQTGEYVKVLDHHVAYFRPGKDLKERVWGIKG.

It belongs to the bacterial histone-like protein family.

In terms of biological role, histone-like DNA-binding protein which is capable of wrapping DNA to stabilize it, and thus to prevent its denaturation under extreme environmental conditions. The protein is DNA-binding protein HBbu (hbb) of Borreliella afzelii (Borrelia afzelii).